Reading from the N-terminus, the 441-residue chain is Trigger factor (441 aa).

Positions 161-246 (GDMVTVDFQG…VKDVKERILA (86 aa)) constitute a PPIase FKBP-type domain.

This sequence belongs to the FKBP-type PPIase family. Tig subfamily.

The protein localises to the cytoplasm. The enzyme catalyses [protein]-peptidylproline (omega=180) = [protein]-peptidylproline (omega=0). Its function is as follows. Involved in protein export. Acts as a chaperone by maintaining the newly synthesized protein in an open conformation. Functions as a peptidyl-prolyl cis-trans isomerase. This chain is Trigger factor, found in Desulfotalea psychrophila (strain LSv54 / DSM 12343).